The chain runs to 305 residues: tRNA pseudouridine synthase B (305 aa).

Residue Asp48 is the Nucleophile of the active site.

This sequence belongs to the pseudouridine synthase TruB family. Type 1 subfamily.

The enzyme catalyses uridine(55) in tRNA = pseudouridine(55) in tRNA. In terms of biological role, responsible for synthesis of pseudouridine from uracil-55 in the psi GC loop of transfer RNAs. This is tRNA pseudouridine synthase B from Mannheimia succiniciproducens (strain KCTC 0769BP / MBEL55E).